Here is a 189-residue protein sequence, read N- to C-terminus: Movement protein (189 aa).

It belongs to the tombusvirus/aureusvirus movement protein p22 family.

It is found in the host membrane. Functionally, transports viral genome to neighboring plant cells directly through plasmosdesmata, without any budding. The movement protein allows efficient cell to cell propagation, by bypassing the host cell wall barrier. In Cymbidium ringspot virus (CymRSV), this protein is Movement protein.